The chain runs to 479 residues: MTTFVDRVELHVAAGSGGHGCASVHREKFKPLGGPDGGNGGRGGDVILVVDQSVTTLLDYHHKPHRSATNGKPGEGGNRSGKDGQDLILPVPDGTVIQDKAGNVLADLVGHGTSYVAAQGGRGGLGNAALASARRKAPGFALLGEPGDFQDIVLELKTVADVALVGYPSAGKSSLISVLSAAKPKIADYPFTTLVPNLGVVTAGSTVYTIADVPGLIPGASQGKGLGLEFLRHVERCSVLVHVLDTATLESDRDPVSDLDIIEEELTQYGGGLNNRPRMVVLNKIDVPDGKDLAEMVRPELEARGYRVFEVSAVAHMGLKELSFALAELVGAARAAKPKEEATRIVIRPKAVDDAGFTVVLEEDGLYRVRGEKPERWVRQTDFNNDEAVGYLADRLNRLGVETELMKAGARAGDGVAIGPEDNAVVFDWEPTVMAGAEMLGRRGEDHRLDEPRPAAQRRRDKQAERDDAEKEYDDFEPF.

An Obg domain is found at 2 to 159; the sequence is TTFVDRVELH…QDIVLELKTV (158 aa). The disordered stretch occupies residues 61–87; that stretch reads HHKPHRSATNGKPGEGGNRSGKDGQDL. Positions 160 to 331 constitute an OBG-type G domain; the sequence is ADVALVGYPS…LSFALAELVG (172 aa). GTP is bound by residues 166–173, 191–195, 212–215, 283–286, and 312–314; these read GYPSAGKS, FTTLV, DVPG, NKID, and SAV. Ser173 and Thr193 together coordinate Mg(2+). One can recognise an OCT domain in the interval 349-431; the sequence is PKAVDDAGFT…DNAVVFDWEP (83 aa). Basic and acidic residues predominate over residues 440-453; that stretch reads LGRRGEDHRLDEPR. The disordered stretch occupies residues 440–479; that stretch reads LGRRGEDHRLDEPRPAAQRRRDKQAERDDAEKEYDDFEPF. Residues 470–479 show a composition bias toward acidic residues; it reads EKEYDDFEPF.

The protein belongs to the TRAFAC class OBG-HflX-like GTPase superfamily. OBG GTPase family. Monomer. Mg(2+) is required as a cofactor.

Its subcellular location is the cytoplasm. Functionally, an essential GTPase which binds GTP, GDP and possibly (p)ppGpp with moderate affinity, with high nucleotide exchange rates and a fairly low GTP hydrolysis rate. Plays a role in control of the cell cycle, stress response, ribosome biogenesis and in those bacteria that undergo differentiation, in morphogenesis control. The polypeptide is GTPase Obg (Streptomyces avermitilis (strain ATCC 31267 / DSM 46492 / JCM 5070 / NBRC 14893 / NCIMB 12804 / NRRL 8165 / MA-4680)).